Consider the following 243-residue polypeptide: Ubiquinone/menaquinone biosynthesis C-methyltransferase UbiE (243 aa).

Residues Thr-69, Asp-90, and 116 to 117 (DA) contribute to the S-adenosyl-L-methionine site.

The protein belongs to the class I-like SAM-binding methyltransferase superfamily. MenG/UbiE family.

The enzyme catalyses a 2-demethylmenaquinol + S-adenosyl-L-methionine = a menaquinol + S-adenosyl-L-homocysteine + H(+). The catalysed reaction is a 2-methoxy-6-(all-trans-polyprenyl)benzene-1,4-diol + S-adenosyl-L-methionine = a 5-methoxy-2-methyl-3-(all-trans-polyprenyl)benzene-1,4-diol + S-adenosyl-L-homocysteine + H(+). Its pathway is quinol/quinone metabolism; menaquinone biosynthesis; menaquinol from 1,4-dihydroxy-2-naphthoate: step 2/2. It participates in cofactor biosynthesis; ubiquinone biosynthesis. Functionally, methyltransferase required for the conversion of demethylmenaquinol (DMKH2) to menaquinol (MKH2) and the conversion of 2-polyprenyl-6-methoxy-1,4-benzoquinol (DDMQH2) to 2-polyprenyl-3-methyl-6-methoxy-1,4-benzoquinol (DMQH2). This chain is Ubiquinone/menaquinone biosynthesis C-methyltransferase UbiE, found in Burkholderia multivorans (strain ATCC 17616 / 249).